A 662-amino-acid polypeptide reads, in one-letter code: Protein translocase subunit SecA 2 (662 aa).

Residues Gln-110, 128–132 (GEGKT), and Asp-538 each bind ATP.

This sequence belongs to the SecA family. Monomer and homodimer. Part of the essential Sec protein translocation apparatus which comprises SecA, SecYEG and auxiliary proteins SecDF. Other proteins may also be involved.

Its subcellular location is the cell inner membrane. The protein localises to the cytoplasm. It catalyses the reaction ATP + H2O + cellular proteinSide 1 = ADP + phosphate + cellular proteinSide 2.. Functionally, part of the Sec protein translocase complex. Interacts with the SecYEG preprotein conducting channel. Has a central role in coupling the hydrolysis of ATP to the transfer of proteins into and across the cell membrane, serving as an ATP-driven molecular motor driving the stepwise translocation of polypeptide chains across the membrane. This is Protein translocase subunit SecA 2 from Chlorobium chlorochromatii (strain CaD3).